Reading from the N-terminus, the 229-residue chain is Dolichyldiphosphatase 1 (229 aa).

4 helical membrane passes run 27–47 (LFNA…ITLI), 94–114 (MPSS…LFYL), 120–140 (FGSK…AAGV), and 156–176 (FCGS…IEYI).

The protein belongs to the dolichyldiphosphatase family.

The protein localises to the endoplasmic reticulum membrane. It catalyses the reaction a di-trans,poly-cis-dolichyl diphosphate + H2O = a di-trans,poly-cis-dolichyl phosphate + phosphate + H(+). The protein operates within protein modification; protein glycosylation. In terms of biological role, required for efficient N-glycosylation. Necessary for maintaining optimal levels of dolichol-linked oligosaccharides. Hydrolyzes dolichyl pyrophosphate at a very high rate and dolichyl monophosphate at a much lower rate. Does not act on phosphatidate. This is Dolichyldiphosphatase 1 (dolpp1) from Dictyostelium discoideum (Social amoeba).